A 4466-amino-acid chain; its full sequence is Dynein beta chain, ciliary (4466 aa).

The segment at 1–1813 (MADVVDPRLE…YANICDAQFK (1813 aa)) is stem. 154–161 (AGQVKGKT) provides a ligand contact to ATP. Coiled-coil stretches lie at residues 733 to 805 (TVLE…WTKQ), 1036 to 1056 (TLDQ…EADE), 1306 to 1337 (WLEI…AWDA), and 1443 to 1468 (LLKS…MTSK). AAA stretches follow at residues 1814 to 2035 (YSYE…VLVV), 2095 to 2316 (KVVK…VRFK), 2422 to 2669 (ELDP…VFQG), and 2767 to 3016 (TYNE…ERRY). ATP contacts are provided by residues 1852-1859 (GPAGTGKT), 2133-2140 (GNAGTGKS), 2460-2467 (GNAGLGKS), and 2805-2812 (GVGGSGKQ). Coiled-coil stretches lie at residues 3033–3092 (SLLS…QVVG), 3263–3325 (EPKR…SRTI), and 3573–3642 (QERP…EEAK). Positions 3033–3325 (SLLSMKSKEL…QEAEATSRTI (293 aa)) are stalk. AAA stretches follow at residues 3409 to 3636 (LTDD…EISV) and 3846 to 4072 (VRNF…VLYN).

It belongs to the dynein heavy chain family. As to quaternary structure, consists of at least two heavy chains (alpha and beta), three intermediate chains and several light chains.

It localises to the cell projection. Its subcellular location is the cilium. The protein localises to the flagellum. It is found in the cytoplasm. The protein resides in the cytoskeleton. It localises to the flagellum axoneme. Its function is as follows. Force generating protein of eukaryotic cilia and flagella. Produces force towards the minus ends of microtubules. Dynein has ATPase activity; the force-producing power stroke is thought to occur on release of ADP. In Tripneustes gratilla (Hawaian sea urchin), this protein is Dynein beta chain, ciliary.